A 398-amino-acid polypeptide reads, in one-letter code: Calcium-binding and coiled-coil domain-containing protein 2 (398 aa).

The CLIR motif lies at 133 to 136; it reads ILVV. Residues 137–301 are a coiled coil; that stretch reads TTQGEVEEIE…RENSRLLSYM (165 aa). The LIR-like signature appears at 203-206; the sequence is DYWE. The segment at 314–341 is disordered; it reads TSDEGGAGQNPGLVYGNPYSGIQESSSP. The tract at residues 323–333 is interaction with LGALS8; that stretch reads NPGLVYGNPYS. An interaction with MYO6 region spans residues 347–398; it reads KKCPICKADDICDHTLEQQQMQALCLNCPICDKIFPATEKQIFEDHVFCHSL. The UBZ1-type zinc-finger motif lies at 371–396; that stretch reads CLNCPICDKIFPATEKQIFEDHVFCH. 4 residues coordinate Zn(2+): Cys374, Cys377, His392, and His396. The residue at position 397 (Ser397) is a Phosphoserine.

It belongs to the CALCOCO family. Dimer. Part of a complex consisting of CALCOCO2, TAX1BP1 and MYO6. Interacts with MYO6. Interacts with GEMIN4. Interacts with ATG8 family members MAP1LC3A, MAP1LC3B, GABARAP, GABARAPL1 and GABARAPL2. Interacts with ATG8 family member MAP1LC3C. Interacts with LGALS8. Interacts with TOM1; the interaction is indirect and is mediated by MYO6, which acts as a bridge between TOM1 and CALCOCO2. Interacts with AZI2.

Its subcellular location is the cytoplasm. The protein localises to the perinuclear region. The protein resides in the cytoskeleton. It is found in the cytoplasmic vesicle. It localises to the autophagosome membrane. Its function is as follows. Xenophagy-specific receptor required for autophagy-mediated intracellular bacteria degradation. Acts as an effector protein of galectin-sensed membrane damage that restricts the proliferation of infecting pathogens upon entry into the cytosol by targeting LGALS8-associated bacteria for autophagy. Initially orchestrates bacteria targeting to autophagosomes and subsequently ensures pathogen degradation by regulating pathogen-containing autophagosome maturation. Bacteria targeting to autophagosomes relies on its interaction with MAP1LC3A, MAP1LC3B and/or GABARAPL2, whereas regulation of pathogen-containing autophagosome maturation requires the interaction with MAP3LC3C. May play a role in ruffle formation and actin cytoskeleton organization and seems to negatively regulate constitutive secretion. This chain is Calcium-binding and coiled-coil domain-containing protein 2, found in Macaca fascicularis (Crab-eating macaque).